The primary structure comprises 88 residues: Large ribosomal subunit protein bL27 (88 aa).

The segment at 1–21 (MAHKKGASSSRNGRDSAAQRL) is disordered.

The protein belongs to the bacterial ribosomal protein bL27 family.

The protein is Large ribosomal subunit protein bL27 of Mycobacterium sp. (strain MCS).